Reading from the N-terminus, the 369-residue chain is Uroporphyrinogen decarboxylase (369 aa).

Residues Arg-39, Ala-41, Arg-43, Arg-52, Asp-88, Tyr-166, Ser-221, and His-341 each coordinate coproporphyrinogen I. Positions 39, 41, and 43 each coordinate coproporphyrinogen III. Positions 88, 166, 221, and 341 each coordinate coproporphyrinogen III.

It belongs to the uroporphyrinogen decarboxylase family. As to quaternary structure, homodimer.

Its subcellular location is the cytoplasm. It localises to the cytosol. It carries out the reaction uroporphyrinogen III + 4 H(+) = coproporphyrinogen III + 4 CO2. The catalysed reaction is uroporphyrinogen I + 4 H(+) = coproporphyrinogen I + 4 CO2. It participates in porphyrin-containing compound metabolism; protoporphyrin-IX biosynthesis; coproporphyrinogen-III from 5-aminolevulinate: step 4/4. In terms of biological role, catalyzes the sequential decarboxylation of the four acetate side chains of uroporphyrinogen to form coproporphyrinogen and participates in the fifth step in the heme biosynthetic pathway. Isomer I or isomer III of uroporphyrinogen may serve as substrate, but only coproporphyrinogen III can ultimately be converted to heme. In vitro also decarboxylates pentacarboxylate porphyrinogen I. This Danio rerio (Zebrafish) protein is Uroporphyrinogen decarboxylase.